Here is a 296-residue protein sequence, read N- to C-terminus: tRNA dimethylallyltransferase (296 aa).

11–18 (GPTAVGKT) is an ATP binding site. A substrate-binding site is contributed by 13 to 18 (TAVGKT). The interaction with substrate tRNA stretch occupies residues 36 to 39 (DSQQ).

The protein belongs to the IPP transferase family. Monomer. Mg(2+) serves as cofactor.

It catalyses the reaction adenosine(37) in tRNA + dimethylallyl diphosphate = N(6)-dimethylallyladenosine(37) in tRNA + diphosphate. Functionally, catalyzes the transfer of a dimethylallyl group onto the adenine at position 37 in tRNAs that read codons beginning with uridine, leading to the formation of N6-(dimethylallyl)adenosine (i(6)A). The chain is tRNA dimethylallyltransferase from Streptococcus agalactiae serotype III (strain NEM316).